We begin with the raw amino-acid sequence, 602 residues long: Proline--tRNA ligase (602 aa).

The protein belongs to the class-II aminoacyl-tRNA synthetase family. ProS type 1 subfamily. Homodimer.

The protein localises to the cytoplasm. It catalyses the reaction tRNA(Pro) + L-proline + ATP = L-prolyl-tRNA(Pro) + AMP + diphosphate. Its function is as follows. Catalyzes the attachment of proline to tRNA(Pro) in a two-step reaction: proline is first activated by ATP to form Pro-AMP and then transferred to the acceptor end of tRNA(Pro). As ProRS can inadvertently accommodate and process non-cognate amino acids such as alanine and cysteine, to avoid such errors it has two additional distinct editing activities against alanine. One activity is designated as 'pretransfer' editing and involves the tRNA(Pro)-independent hydrolysis of activated Ala-AMP. The other activity is designated 'posttransfer' editing and involves deacylation of mischarged Ala-tRNA(Pro). The misacylated Cys-tRNA(Pro) is not edited by ProRS. The sequence is that of Proline--tRNA ligase from Thermosynechococcus vestitus (strain NIES-2133 / IAM M-273 / BP-1).